Reading from the N-terminus, the 152-residue chain is Protein-export protein SecB (152 aa).

Belongs to the SecB family. As to quaternary structure, homotetramer, a dimer of dimers. One homotetramer interacts with 1 SecA dimer.

The protein localises to the cytoplasm. In terms of biological role, one of the proteins required for the normal export of preproteins out of the cell cytoplasm. It is a molecular chaperone that binds to a subset of precursor proteins, maintaining them in a translocation-competent state. It also specifically binds to its receptor SecA. This is Protein-export protein SecB from Rickettsia felis (strain ATCC VR-1525 / URRWXCal2) (Rickettsia azadi).